Consider the following 83-residue polypeptide: MKTSMFLTLTGLGLLFVVCYASESEEKEFPKELLSSIFAADSDFKVEERGCLGDKCDYNNGCCSGYVCSRTWKWCVLAGPWRR.

An N-terminal signal peptide occupies residues 1 to 21; the sequence is MKTSMFLTLTGLGLLFVVCYA. Positions 22 to 49 are excised as a propeptide; the sequence is SESEEKEFPKELLSSIFAADSDFKVEER. 3 cysteine pairs are disulfide-bonded: Cys51–Cys63, Cys56–Cys68, and Cys62–Cys75.

The protein belongs to the neurotoxin 10 (Hwtx-1) family. 51 (Hntx-8) subfamily. Hntx-8 sub-subfamily. In terms of tissue distribution, expressed by the venom gland.

The protein localises to the secreted. Agglutinates human and mice erythrocytes. This activity can be specifically inhibited by mannosamine. This lectin shows very low toxicity in both mammals and insects. In Cyriopagopus schmidti (Chinese bird spider), this protein is U5-theraphotoxin-Hs1a 1.